A 1385-amino-acid chain; its full sequence is L-2-aminoadipate reductase large subunit (1385 aa).

Residues 843–920 form the Carrier domain; sequence SSFSPLEQEI…ELAKEISRVR (78 aa). Ser-880 is modified (O-(pantetheine 4'-phosphoryl)serine).

The protein belongs to the ATP-dependent AMP-binding enzyme family. Heterodimer of an alpha and a beta subunit. Requires pantetheine 4'-phosphate as cofactor.

The catalysed reaction is (S)-2-amino-6-oxohexanoate + NADP(+) + H2O = L-2-aminoadipate + NADPH + 2 H(+). It catalyses the reaction (S)-2-amino-6-oxohexanoate + NAD(+) + H2O = L-2-aminoadipate + NADH + 2 H(+). The enzyme catalyses (S)-2-amino-6-oxohexanoate + AMP + diphosphate + NADP(+) = L-2-aminoadipate + ATP + NADPH + H(+). Its pathway is amino-acid biosynthesis; L-lysine biosynthesis via AAA pathway; L-lysine from L-alpha-aminoadipate (fungal route): step 1/3. Catalyzes the activation of alpha-aminoadipate by ATP-dependent adenylation and the reduction of activated alpha-aminoadipate by NADPH. The activated alpha-aminoadipate is bound to the phosphopantheinyl group of the enzyme itself before it is reduced to (S)-2-amino-6-oxohexanoate. The sequence is that of L-2-aminoadipate reductase large subunit (LYS2) from Eremothecium gossypii (strain ATCC 10895 / CBS 109.51 / FGSC 9923 / NRRL Y-1056) (Yeast).